Here is a 241-residue protein sequence, read N- to C-terminus: Ribonuclease PH (241 aa).

Phosphate is bound by residues Arg-89 and 127–129 (GTR).

It belongs to the RNase PH family. As to quaternary structure, homohexameric ring arranged as a trimer of dimers.

It carries out the reaction tRNA(n+1) + phosphate = tRNA(n) + a ribonucleoside 5'-diphosphate. Phosphorolytic 3'-5' exoribonuclease that plays an important role in tRNA 3'-end maturation. Removes nucleotide residues following the 3'-CCA terminus of tRNAs; can also add nucleotides to the ends of RNA molecules by using nucleoside diphosphates as substrates, but this may not be physiologically important. Probably plays a role in initiation of 16S rRNA degradation (leading to ribosome degradation) during starvation. This is Ribonuclease PH from Xanthomonas euvesicatoria pv. vesicatoria (strain 85-10) (Xanthomonas campestris pv. vesicatoria).